A 456-amino-acid chain; its full sequence is tRNA modification GTPase MnmE (456 aa).

Residues R24, E81, and K120 each contribute to the (6S)-5-formyl-5,6,7,8-tetrahydrofolate site. The region spanning 216–379 (GMTVVIAGRP…LRDHLKACMG (164 aa)) is the TrmE-type G domain. N226 contacts K(+). GTP-binding positions include 226 to 231 (NAGKSS), 245 to 251 (TDIAGTT), 270 to 273 (DTAG), and 335 to 338 (NKAD). S230 is a Mg(2+) binding site. Residues T245, I247, and T250 each coordinate K(+). T251 serves as a coordination point for Mg(2+). Residue K456 participates in (6S)-5-formyl-5,6,7,8-tetrahydrofolate binding.

Belongs to the TRAFAC class TrmE-Era-EngA-EngB-Septin-like GTPase superfamily. TrmE GTPase family. As to quaternary structure, homodimer. Heterotetramer of two MnmE and two MnmG subunits. K(+) is required as a cofactor.

Its subcellular location is the cytoplasm. Its function is as follows. Exhibits a very high intrinsic GTPase hydrolysis rate. Involved in the addition of a carboxymethylaminomethyl (cmnm) group at the wobble position (U34) of certain tRNAs, forming tRNA-cmnm(5)s(2)U34. In Pseudomonas fluorescens (strain ATCC BAA-477 / NRRL B-23932 / Pf-5), this protein is tRNA modification GTPase MnmE.